The primary structure comprises 280 residues: Energy-coupling factor transporter ATP-binding protein EcfA1 (280 aa).

In terms of domain architecture, ABC transporter spans 6 to 241 (LRIENISFQY…SHMLQEIGLD (236 aa)). 40 to 47 (GQNGSGKS) serves as a coordination point for ATP.

Belongs to the ABC transporter superfamily. Energy-coupling factor EcfA family. As to quaternary structure, forms a stable energy-coupling factor (ECF) transporter complex composed of 2 membrane-embedded substrate-binding proteins (S component), 2 ATP-binding proteins (A component) and 2 transmembrane proteins (T component).

It is found in the cell membrane. ATP-binding (A) component of a common energy-coupling factor (ECF) ABC-transporter complex. Unlike classic ABC transporters this ECF transporter provides the energy necessary to transport a number of different substrates. In Bacillus cereus (strain ATCC 14579 / DSM 31 / CCUG 7414 / JCM 2152 / NBRC 15305 / NCIMB 9373 / NCTC 2599 / NRRL B-3711), this protein is Energy-coupling factor transporter ATP-binding protein EcfA1.